Reading from the N-terminus, the 250-residue chain is 2-(R)-hydroxypropyl-CoM dehydrogenase (250 aa).

NAD(+)-binding positions include 12–14 (SGN), Asp-33, 60–61 (DV), and Asn-87. Arg-152 serves as a coordination point for 2-oxopropyl-coenzyme M. The Proton acceptor role is filled by Tyr-155. 188–192 (IETPM) lines the NAD(+) pocket. Residue 195–196 (WR) participates in 2-oxopropyl-coenzyme M binding.

Belongs to the short-chain dehydrogenases/reductases (SDR) family. Homodimer in solution. Homotetramer. Component III of the aliphatic epoxide carboxylation complex together with components I, II and IV.

It catalyses the reaction (R)-2-hydroxypropyl-coenzyme M + NAD(+) = 2-oxopropyl-coenzyme M + NADH + H(+). It functions in the pathway alkene metabolism; propylene degradation. Its activity is regulated as follows. Inhibited by the arginine-specific modifiers 2,3-butanedione and phenylglyoxal. 2-(2-methyl-2-hydroxypropylthio)ethanesulfonate (M-HPC), an achiral analog of both R-HPC and S-HPC, and (2S)-2-hydroxypropyl-coenzyme M (S-HPC) are competitive inhibitors. Inhibited (at 70%) by the coenzyme M analog 2-bromoethanesulfonate (BES). Functionally, involved in aliphatic epoxide carboxylation. Catalyzes the reversible oxidation of (R)-2-hydroxypropyl-coenzyme M (R-HPC) to 2-oxopropyl-coenzyme M (2-KPC). The enzyme is highly specific for the R enantiomers. In vitro can also use achiral 2-propanol and short-chain (R)- and (S)-2-alkanols. This is 2-(R)-hydroxypropyl-CoM dehydrogenase from Xanthobacter autotrophicus (strain ATCC BAA-1158 / Py2).